The primary structure comprises 238 residues: Phosphoribosylaminoimidazole-succinocarboxamide synthase (238 aa).

This sequence belongs to the SAICAR synthetase family.

The catalysed reaction is 5-amino-1-(5-phospho-D-ribosyl)imidazole-4-carboxylate + L-aspartate + ATP = (2S)-2-[5-amino-1-(5-phospho-beta-D-ribosyl)imidazole-4-carboxamido]succinate + ADP + phosphate + 2 H(+). The protein operates within purine metabolism; IMP biosynthesis via de novo pathway; 5-amino-1-(5-phospho-D-ribosyl)imidazole-4-carboxamide from 5-amino-1-(5-phospho-D-ribosyl)imidazole-4-carboxylate: step 1/2. The protein is Phosphoribosylaminoimidazole-succinocarboxamide synthase (purC) of Pyrococcus horikoshii (strain ATCC 700860 / DSM 12428 / JCM 9974 / NBRC 100139 / OT-3).